The primary structure comprises 204 residues: Recombination protein RecR (204 aa).

A C4-type zinc finger spans residues 63 to 78; the sequence is CRRCFNITVGELCAIC. The region spanning 86-181 is the Toprim domain; sequence TKICVVEEPL…RVTRPARGLP (96 aa).

This sequence belongs to the RecR family.

Its function is as follows. May play a role in DNA repair. It seems to be involved in an RecBC-independent recombinational process of DNA repair. It may act with RecF and RecO. This is Recombination protein RecR from Chloroflexus aurantiacus (strain ATCC 29366 / DSM 635 / J-10-fl).